The following is a 136-amino-acid chain: Histone H3.1t (136 aa).

Positions 1-43 are disordered; it reads MARTKQTARKSTGGKAPRKQLATKVARKSAPATGGVKKPHRYR. Asymmetric dimethylarginine; by PRMT6; alternate is present on arginine 3. Position 3 is a citrulline; alternate (arginine 3). Threonine 4 carries the phosphothreonine; by HASPIN modification. An Allysine; alternate modification is found at lysine 5. Lysine 5 carries the N6,N6,N6-trimethyllysine; alternate modification. At lysine 5 the chain carries N6,N6-dimethyllysine; alternate. The residue at position 5 (lysine 5) is an N6-(2-hydroxyisobutyryl)lysine; alternate. Residue lysine 5 is modified to N6-(beta-hydroxybutyryl)lysine; alternate. An N6-acetyllysine; alternate modification is found at lysine 5. Residue lysine 5 is modified to N6-methyllysine; alternate. Glutamine 6 is subject to 5-glutamyl dopamine; alternate. Glutamine 6 is modified (5-glutamyl serotonin; alternate). Threonine 7 bears the Phosphothreonine; by PKC mark. Arginine 9 carries the post-translational modification Citrulline; alternate. Position 9 is a symmetric dimethylarginine; by PRMT5; alternate (arginine 9). Residue lysine 10 is modified to N6,N6,N6-trimethyllysine; alternate. Lysine 10 is modified (N6,N6-dimethyllysine; alternate). Lysine 10 bears the N6-(2-hydroxyisobutyryl)lysine; alternate mark. Lysine 10 is modified (N6-(beta-hydroxybutyryl)lysine; alternate). Lysine 10 bears the N6-acetyllysine; alternate mark. At lysine 10 the chain carries N6-methyllysine; alternate. Position 10 is an N6-lactoyllysine; alternate (lysine 10). Residue serine 11 is modified to ADP-ribosylserine; alternate. Serine 11 is subject to Phosphoserine; alternate; by AURKB, AURKC, RPS6KA3, RPS6KA4 and RPS6KA5. Position 12 is a phosphothreonine; by PKC (threonine 12). An N6-(2-hydroxyisobutyryl)lysine; alternate modification is found at lysine 15. The residue at position 15 (lysine 15) is an N6-(beta-hydroxybutyryl)lysine; alternate. Lysine 15 carries the N6-acetyllysine; alternate modification. Lysine 15 is modified (N6-lactoyllysine; alternate). Lysine 15 is subject to N6-glutaryllysine; alternate. Lysine 15 is modified (N6-succinyllysine; alternate). Citrulline; alternate is present on arginine 18. The residue at position 18 (arginine 18) is an Asymmetric dimethylarginine; by CARM1; alternate. N6-(2-hydroxyisobutyryl)lysine; alternate occurs at positions 19 and 24. An N6-(beta-hydroxybutyryl)lysine; alternate mark is found at lysine 19 and lysine 24. Residues lysine 19 and lysine 24 each carry the N6-acetyllysine; alternate modification. N6-methyllysine; alternate is present on residues lysine 19 and lysine 24. An N6-lactoyllysine; alternate mark is found at lysine 19 and lysine 24. Lysine 19 and lysine 24 each carry N6-glutaryllysine; alternate. 2 positions are modified to N6-butyryllysine; alternate: lysine 19 and lysine 24. At arginine 27 the chain carries Citrulline. Lysine 28 is subject to N6,N6,N6-trimethyllysine; alternate. Lysine 28 is modified (N6,N6-dimethyllysine; alternate). The residue at position 28 (lysine 28) is an N6-(2-hydroxyisobutyryl)lysine; alternate. Lysine 28 bears the N6-acetyllysine; alternate mark. Lysine 28 is modified (N6-methyllysine; alternate). Position 28 is an N6-lactoyllysine; alternate (lysine 28). N6-glutaryllysine; alternate is present on lysine 28. At serine 29 the chain carries ADP-ribosylserine; alternate. Serine 29 carries the post-translational modification Phosphoserine; alternate; by AURKB, AURKC and RPS6KA5. Lysine 37 is modified (N6,N6,N6-trimethyllysine; alternate). Lysine 37 is subject to N6,N6-dimethyllysine; alternate. Lysine 37 carries the N6-(2-hydroxyisobutyryl)lysine; alternate modification. Lysine 37 is subject to N6-acetyllysine; alternate. N6-methyllysine; alternate is present on lysine 37. Lysine 38 carries the N6-methyllysine modification. The residue at position 42 (tyrosine 42) is a Phosphotyrosine. Lysine 57 carries the N6,N6,N6-trimethyllysine; alternate modification. Position 57 is an N6-(2-hydroxyisobutyryl)lysine; alternate (lysine 57). Position 57 is an N6-(beta-hydroxybutyryl)lysine; alternate (lysine 57). Lysine 57 carries the post-translational modification N6-acetyllysine; alternate. Lysine 57 carries the N6-lactoyllysine; alternate modification. Lysine 57 is subject to N6-glutaryllysine; alternate. Lysine 57 carries the N6-succinyllysine; alternate modification. Lysine 57 is modified (N6-methyllysine; by EHMT2; alternate). A Phosphoserine modification is found at serine 58. Residues lysine 65 and lysine 80 each carry the N6-(2-hydroxyisobutyryl)lysine; alternate modification. N6-methyllysine; alternate occurs at positions 65 and 80. An N6,N6,N6-trimethyllysine; alternate modification is found at lysine 80. Lysine 80 is subject to N6,N6-dimethyllysine; alternate. Position 80 is an N6-acetyllysine; alternate (lysine 80). Lysine 80 is modified (N6-lactoyllysine; alternate). Position 80 is an N6-glutaryllysine; alternate (lysine 80). An N6-succinyllysine; alternate modification is found at lysine 80. Threonine 81 carries the phosphothreonine modification. Serine 87 carries the phosphoserine modification. Residue threonine 108 is modified to Phosphothreonine. 2 positions are modified to N6-acetyllysine; alternate: lysine 116 and lysine 123. An N6-glutaryllysine; alternate mark is found at lysine 116 and lysine 123. Lysine 123 is subject to N6-(2-hydroxyisobutyryl)lysine; alternate. Lysine 123 is modified (N6-methyllysine; alternate). Lysine 123 is modified (N6-succinyllysine; alternate).

The protein belongs to the histone H3 family. As to quaternary structure, the nucleosome is a histone octamer containing two molecules each of H2A, H2B, H3 and H4 assembled in one H3-H4 heterotetramer and two H2A-H2B heterodimers. The octamer wraps approximately 147 bp of DNA. Interacts with TONSL; CHAF1A and CHAF1B. Acetylation is generally linked to gene activation. Acetylation on Lys-10 (H3K9ac) impairs methylation at Arg-9 (H3R8me2s). Acetylation on Lys-19 (H3K18ac) and Lys-24 (H3K24ac) favors methylation at Arg-18 (H3R17me). Acetylation at Lys-123 (H3K122ac) by EP300/p300 plays a central role in chromatin structure: localizes at the surface of the histone octamer and stimulates transcription, possibly by promoting nucleosome instability. In terms of processing, citrullination at Arg-9 (H3R8ci) and/or Arg-18 (H3R17ci) by PADI4 impairs methylation and represses transcription. Post-translationally, asymmetric dimethylation at Arg-18 (H3R17me2a) by CARM1 is linked to gene activation. Symmetric dimethylation at Arg-9 (H3R8me2s) by PRMT5 is linked to gene repression. Asymmetric dimethylation at Arg-3 (H3R2me2a) by PRMT6 is linked to gene repression and is mutually exclusive with H3 Lys-5 methylation (H3K4me2 and H3K4me3). H3R2me2a is present at the 3' of genes regardless of their transcription state and is enriched on inactive promoters, while it is absent on active promoters. Methylation at Lys-5 (H3K4me), Lys-37 (H3K36me) and Lys-80 (H3K79me) are linked to gene activation. Methylation at Lys-5 (H3K4me) facilitates subsequent acetylation of H3 and H4. Methylation at Lys-80 (H3K79me) is associated with DNA double-strand break (DSB) responses and is a specific target for TP53BP1. Methylation at Lys-10 (H3K9me) and Lys-28 (H3K27me) are linked to gene repression. Methylation at Lys-10 (H3K9me) is a specific target for HP1 proteins (CBX1, CBX3 and CBX5) and prevents subsequent phosphorylation at Ser-11 (H3S10ph) and acetylation of H3 and H4. Methylation at Lys-5 (H3K4me) and Lys-80 (H3K79me) require preliminary monoubiquitination of H2B at 'Lys-120'. Methylation at Lys-10 (H3K9me) and Lys-28 (H3K27me) are enriched in inactive X chromosome chromatin. Monomethylation at Lys-57 (H3K56me1) by EHMT2/G9A in G1 phase promotes interaction with PCNA and is required for DNA replication. In terms of processing, phosphorylated at Thr-4 (H3T3ph) by HASPIN during prophase and dephosphorylated during anaphase. Phosphorylation at Ser-11 (H3S10ph) by AURKB is crucial for chromosome condensation and cell-cycle progression during mitosis and meiosis. In addition phosphorylation at Ser-11 (H3S10ph) by RPS6KA4 and RPS6KA5 is important during interphase because it enables the transcription of genes following external stimulation, like mitogens, stress, growth factors or UV irradiation and result in the activation of genes, such as c-fos and c-jun. Phosphorylation at Ser-11 (H3S10ph), which is linked to gene activation, prevents methylation at Lys-10 (H3K9me) but facilitates acetylation of H3 and H4. Phosphorylation at Ser-11 (H3S10ph) by AURKB mediates the dissociation of HP1 proteins (CBX1, CBX3 and CBX5) from heterochromatin. Phosphorylation at Ser-11 (H3S10ph) is also an essential regulatory mechanism for neoplastic cell transformation. Phosphorylated at Ser-29 (H3S28ph) by MAP3K20 isoform 1, RPS6KA5 or AURKB during mitosis or upon ultraviolet B irradiation. Phosphorylation at Thr-7 (H3T6ph) by PRKCB is a specific tag for epigenetic transcriptional activation that prevents demethylation of Lys-5 (H3K4me) by LSD1/KDM1A. At centromeres, specifically phosphorylated at Thr-12 (H3T11ph) from prophase to early anaphase, by DAPK3 and PKN1. Phosphorylation at Thr-12 (H3T11ph) by PKN1 or isoform M2 of PKM (PKM2) is a specific tag for epigenetic transcriptional activation that promotes demethylation of Lys-10 (H3K9me) by KDM4C/JMJD2C. Phosphorylation at Tyr-42 (H3Y41ph) by JAK2 promotes exclusion of CBX5 (HP1 alpha) from chromatin. Post-translationally, ubiquitinated. Lysine deamination at Lys-5 (H3K4all) to form allysine is mediated by LOXL2. Allysine formation by LOXL2 only takes place on H3K4me3 and results in gene repression. In terms of processing, butyrylation of histones marks active promoters and competes with histone acetylation. It is present during late spermatogenesis. Post-translationally, succinylation at Lys-80 (H3K79succ) by KAT2A takes place with a maximum frequency around the transcription start sites of genes. It gives a specific tag for epigenetic transcription activation. Desuccinylation at Lys-123 (H3K122succ) by SIRT7 in response to DNA damage promotes chromatin condensation and double-strand breaks (DSBs) repair. Serine ADP-ribosylation constitutes the primary form of ADP-ribosylation of proteins in response to DNA damage. Serine ADP-ribosylation at Ser-11 (H3S10ADPr) is mutually exclusive with phosphorylation at Ser-11 (H3S10ph) and impairs acetylation at Lys-10 (H3K9ac). Expressed in testicular cells.

The protein localises to the nucleus. It is found in the chromosome. Functionally, core component of nucleosome. Nucleosomes wrap and compact DNA into chromatin, limiting DNA accessibility to the cellular machineries which require DNA as a template. Histones thereby play a central role in transcription regulation, DNA repair, DNA replication and chromosomal stability. DNA accessibility is regulated via a complex set of post-translational modifications of histones, also called histone code, and nucleosome remodeling. The polypeptide is Histone H3.1t (Homo sapiens (Human)).